The chain runs to 704 residues: Glycine--tRNA ligase beta subunit (704 aa).

This sequence belongs to the class-II aminoacyl-tRNA synthetase family. Tetramer of two alpha and two beta subunits.

It is found in the cytoplasm. The catalysed reaction is tRNA(Gly) + glycine + ATP = glycyl-tRNA(Gly) + AMP + diphosphate. The chain is Glycine--tRNA ligase beta subunit from Rhizobium etli (strain ATCC 51251 / DSM 11541 / JCM 21823 / NBRC 15573 / CFN 42).